Consider the following 157-residue polypeptide: Transcription elongation factor GreA (157 aa).

A coiled-coil region spans residues 14 to 37 (LRKELERLLKRRPLITEAIAEARE).

The protein belongs to the GreA/GreB family.

Necessary for efficient RNA polymerase transcription elongation past template-encoded arresting sites. The arresting sites in DNA have the property of trapping a certain fraction of elongating RNA polymerases that pass through, resulting in locked ternary complexes. Cleavage of the nascent transcript by cleavage factors such as GreA or GreB allows the resumption of elongation from the new 3'terminus. GreA releases sequences of 2 to 3 nucleotides. This chain is Transcription elongation factor GreA, found in Vibrio vulnificus (strain CMCP6).